The following is a 136-amino-acid chain: Protein YebF (136 aa).

Residues 1 to 23 (MKKTGLALVLATILLGMMGSVHA) form the signal peptide. The YebF/Cmi domain occupies 30–117 (KVPACIGLNQ…KSGTMTYTGL (88 aa)). An intrachain disulfide couples Cys-34 to Cys-107. The segment at 117–136 (LNAQTRPDPQIGLNSQAGPK) is disordered.

Belongs to the YebF family.

The protein resides in the secreted. This is Protein YebF from Yersinia pseudotuberculosis serotype O:1b (strain IP 31758).